The following is a 391-amino-acid chain: Heme A synthase (391 aa).

Transmembrane regions (helical) follow at residues 37-57 (IRLWLMALFVLVMAMIVVGGL), 121-141 (RQLGRVIGLVWAVGFLGFLVA), 152-172 (LLALGVLGGIQGGIGWWMVAS), 186-206 (LAVHLSLAFIILGMIAWQALL), 229-249 (TTVLIVVAFLQVVLGALVAGI), 298-318 (FLHRMAGYALVALGLVFWIFG), 332-352 (LLALALLAQVALGVGTVLSAA), and 354-374 (WQVAIAHQVGAVVIWVLILHA). H300 is a heme binding site. H360 contributes to the heme binding site.

The protein belongs to the COX15/CtaA family. Type 2 subfamily. As to quaternary structure, interacts with CtaB. It depends on heme b as a cofactor.

It localises to the cell membrane. It catalyses the reaction Fe(II)-heme o + 2 A + H2O = Fe(II)-heme a + 2 AH2. It participates in porphyrin-containing compound metabolism; heme A biosynthesis; heme A from heme O: step 1/1. In terms of biological role, catalyzes the conversion of heme O to heme A by two successive hydroxylations of the methyl group at C8. The first hydroxylation forms heme I, the second hydroxylation results in an unstable dihydroxymethyl group, which spontaneously dehydrates, resulting in the formyl group of heme A. This chain is Heme A synthase, found in Cereibacter sphaeroides (strain ATCC 17025 / ATH 2.4.3) (Rhodobacter sphaeroides).